Here is a 120-residue protein sequence, read N- to C-terminus: Large ribosomal subunit protein uL18 (120 aa).

Belongs to the universal ribosomal protein uL18 family. As to quaternary structure, part of the 50S ribosomal subunit; part of the 5S rRNA/L5/L18/L25 subcomplex. Contacts the 5S and 23S rRNAs.

Its function is as follows. This is one of the proteins that bind and probably mediate the attachment of the 5S RNA into the large ribosomal subunit, where it forms part of the central protuberance. This chain is Large ribosomal subunit protein uL18, found in Rhodopseudomonas palustris (strain BisB18).